Consider the following 407-residue polypeptide: MEITLGIAMFTVIVLALAVIILFAKSKLVNSGDITIEINDDPSKAIHLPAGGKLLGALASQGIFVSSACGGGGSCGQCIVKVTEGGGDILPTELSHISKREAKEGYRLSCQVNVKNSMKVELPEEVFGVKKWECTVISNDNKATFIKELKLAIPEGEEVPFRAGGYIQIEAEPHTVAYKDFDIPEEYHEDWDKYNLWRYVSKVDEHIIRAYSMASYPEEKGIIMLNVRIATPPPNNPDAPPGQMSSYIWSLKAGDKVTISGPFGEFFAKETDAEMVFVGGGAGMAPMRSHIFDQLKRLKSKRKMSFWYGARSKREMFYVEDFDTLQAENDNFVWHVALSDPQPGDNWDGYTGFIHNVLYENYLKDHEAPEDCEYYMCGPPIMNASVIKMLKDLGVEDENILLDDFGG.

The chain crosses the membrane as a helical span at residues 3-23 (ITLGIAMFTVIVLALAVIILF). The 2Fe-2S ferredoxin-type domain maps to 32 to 126 (GDITIEINDD…SMKVELPEEV (95 aa)). [2Fe-2S] cluster contacts are provided by Cys69, Cys75, Cys78, and Cys110. One can recognise an FAD-binding FR-type domain in the interval 129–269 (VKKWECTVIS…SGPFGEFFAK (141 aa)). The interval 272–389 (DAEMVFVGGG…PIMNASVIKM (118 aa)) is catalytic.

It belongs to the NqrF family. Composed of six subunits; NqrA, NqrB, NqrC, NqrD, NqrE and NqrF. The cofactor is [2Fe-2S] cluster. Requires FAD as cofactor.

Its subcellular location is the cell inner membrane. It carries out the reaction a ubiquinone + n Na(+)(in) + NADH + H(+) = a ubiquinol + n Na(+)(out) + NAD(+). NQR complex catalyzes the reduction of ubiquinone-1 to ubiquinol by two successive reactions, coupled with the transport of Na(+) ions from the cytoplasm to the periplasm. The first step is catalyzed by NqrF, which accepts electrons from NADH and reduces ubiquinone-1 to ubisemiquinone by a one-electron transfer pathway. The protein is Na(+)-translocating NADH-quinone reductase subunit F of Pasteurella multocida (strain Pm70).